The sequence spans 62 residues: uncharacterized protein (62 aa).

This is an uncharacterized protein from Saccharomyces cerevisiae (strain ATCC 204508 / S288c) (Baker's yeast).